We begin with the raw amino-acid sequence, 694 residues long: DNA ligase (694 aa).

NAD(+) is bound by residues 41–45 (DAEFD), 91–92 (SL), and E121. K123 (N6-AMP-lysine intermediate) is an active-site residue. R144, E184, K300, and K324 together coordinate NAD(+). Zn(2+) is bound by residues C418, C421, C437, and C443. One can recognise a BRCT domain in the interval 607–694 (SVLPTCEGLT…QGPPVQQVVD (88 aa)).

Belongs to the NAD-dependent DNA ligase family. LigA subfamily. The cofactor is Mg(2+). It depends on Mn(2+) as a cofactor.

The enzyme catalyses NAD(+) + (deoxyribonucleotide)n-3'-hydroxyl + 5'-phospho-(deoxyribonucleotide)m = (deoxyribonucleotide)n+m + AMP + beta-nicotinamide D-nucleotide.. In terms of biological role, DNA ligase that catalyzes the formation of phosphodiester linkages between 5'-phosphoryl and 3'-hydroxyl groups in double-stranded DNA using NAD as a coenzyme and as the energy source for the reaction. It is essential for DNA replication and repair of damaged DNA. The sequence is that of DNA ligase from Mycobacterium leprae (strain TN).